The sequence spans 469 residues: Keratin, type I cytoskeletal 16 (469 aa).

The interval 1 to 20 (MATCSRQFTSSSSMKGSCGI) is disordered. Positions 1-112 (MATCSRQFTS…GIGDGLLVGS (112 aa)) are head. Residues 113 to 148 (EKVTMQNLNDRLATYLDKVRALEEANRDLEVKIRDW) form a coil 1A region. The 312-residue stretch at 113-424 (EKVTMQNLND…RLLDGENIHS (312 aa)) folds into the IF rod domain. The linker 1 stretch occupies residues 149–166 (YQRQRPTEIKDYSPYFKT). The interval 167–258 (IEDLKSKIII…KNHEEEMLAL (92 aa)) is coil 1B. Residues 259–281 (RGQTGGDVNVEMDAAPGVDLSRI) are linker 12. The segment at 282 to 420 (LNEMRDQYEQ…ATYRRLLDGE (139 aa)) is coil 2. A tail region spans residues 421–469 (NIHSSSQHSSGQSYSSREVFSSSSRQPRSILKEQGSTSFSQSQSQSSRD). The tract at residues 422 to 469 (IHSSSQHSSGQSYSSREVFSSSSRQPRSILKEQGSTSFSQSQSQSSRD) is disordered. Composition is skewed to low complexity over residues 423-444 (HSSS…SSSS) and 454-469 (QGST…SSRD).

Belongs to the intermediate filament family. Heterodimer of a type I and a type II keratin. KRT16 associates with KRT6 isomers (KRT6A or KRT6B). Interacts with TCHP. Interacts with TRADD. As to expression, expressed in the epithelia of the tongue, upper and lower palate, footpad, proximal nail fold and nail bed, penile spine, sweat gland ducts, and back epidermis (at protein level). Expressed in upper suprabasal layers of the corneal epithelium (at protein level). Expressed in internal stratified epithelia in the esophagus and vagina (at protein level). Expressed in transitional stratified squamous epithelia in the forestomach, anal canal, and nasal cavity (at protein level). Expressed in transitional epithelia of the ureter, bladder and urethra (at protein level). In mature hair follicles, expressed in the companion layer of the outer root sheath during anagen and in the club hair sheath during catagen and telogen (at protein level).

In terms of biological role, epidermis-specific type I keratin that plays a key role in skin. Acts as a regulator of innate immunity in response to skin barrier breach: required for some inflammatory checkpoint for the skin barrier maintenance. This chain is Keratin, type I cytoskeletal 16 (Krt16), found in Mus musculus (Mouse).